Consider the following 108-residue polypeptide: Small ribosomal subunit protein bS16 (108 aa).

It belongs to the bacterial ribosomal protein bS16 family.

The sequence is that of Small ribosomal subunit protein bS16 from Orientia tsutsugamushi (strain Boryong) (Rickettsia tsutsugamushi).